The sequence spans 1177 residues: DNA-directed RNA polymerase subunit beta (1177 aa).

A compositionally biased stretch (acidic residues) spans 1147 to 1161 (DDTEIEMRDTEDDDD). The tract at residues 1147-1177 (DDTEIEMRDTEDDDDHQSADKLNVEVETTKE) is disordered. The span at 1162-1177 (HQSADKLNVEVETTKE) shows a compositional bias: basic and acidic residues.

It belongs to the RNA polymerase beta chain family. The RNAP catalytic core consists of 2 alpha, 1 beta, 1 beta' and 1 omega subunit. When a sigma factor is associated with the core the holoenzyme is formed, which can initiate transcription.

The enzyme catalyses RNA(n) + a ribonucleoside 5'-triphosphate = RNA(n+1) + diphosphate. Its function is as follows. DNA-dependent RNA polymerase catalyzes the transcription of DNA into RNA using the four ribonucleoside triphosphates as substrates. This is DNA-directed RNA polymerase subunit beta from Bacillus thuringiensis (strain Al Hakam).